Consider the following 178-residue polypeptide: MORN repeat-containing protein 5 (178 aa).

MORN repeat units lie at residues 8-30, 31-53, and 54-75; these read YDGD…THTR, YVGE…NGSK, and YEGT…DGLK.

It is found in the cell projection. The protein localises to the cilium. It localises to the flagellum. The chain is MORN repeat-containing protein 5 (morn5) from Danio rerio (Zebrafish).